The chain runs to 291 residues: Transmembrane O-methyltransferase (291 aa).

The chain crosses the membrane as a helical span at residues 31 to 51 (VGTMSPAIALAFLPLVVTLLV). Residues glutamate 137, 139 to 140 (GT), serine 145, glutamate 163, and serine 193 contribute to the S-adenosyl-L-methionine site.

The protein belongs to the class I-like SAM-binding methyltransferase superfamily. Cation-dependent O-methyltransferase family. As to quaternary structure, interacts with LHFPL5, PCDH15, TMC1, TMC2 and TMIE. Interacts directly with TMC1. The interaction of TOMT with TMC1 and TMC2 is required for the transportation of TMC1/2 into the stereocilia of hair cells.

Its subcellular location is the membrane. It is found in the cytoplasm. The protein resides in the endoplasmic reticulum. The enzyme catalyses a catechol + S-adenosyl-L-methionine = a guaiacol + S-adenosyl-L-homocysteine + H(+). Catalyzes the O-methylation, and thereby the inactivation, of catecholamine neurotransmitters and catechol hormones. Required for auditory function. Component of the cochlear hair cell's mechanotransduction (MET) machinery. Involved in the assembly of the asymmetric tip-link MET complex. Required for transportation of TMC1 and TMC2 proteins into the mechanically sensitive stereocilia of the hair cells. The function in MET is independent of the enzymatic activity. The polypeptide is Transmembrane O-methyltransferase (Pan troglodytes (Chimpanzee)).